The primary structure comprises 99 residues: Probable non-specific lipid-transfer protein AKCS9 (99 aa).

A signal peptide spans 1–33 (MTMKMKMKMSVVCAVVVVALFLIDVGPVAEAVT). 4 disulfides stabilise this stretch: Cys-34–Cys-68, Cys-42–Cys-56, Cys-57–Cys-92, and Cys-66–Cys-99.

Belongs to the plant LTP family. As to expression, expressed in most tissues except nodules.

Potential lipid transfer protein. The protein is Probable non-specific lipid-transfer protein AKCS9 of Vigna unguiculata (Cowpea).